The primary structure comprises 446 residues: UDP-N-acetylmuramoylalanine--D-glutamate ligase (446 aa).

Gly-118–Thr-124 provides a ligand contact to ATP.

It belongs to the MurCDEF family.

Its subcellular location is the cytoplasm. It catalyses the reaction UDP-N-acetyl-alpha-D-muramoyl-L-alanine + D-glutamate + ATP = UDP-N-acetyl-alpha-D-muramoyl-L-alanyl-D-glutamate + ADP + phosphate + H(+). It participates in cell wall biogenesis; peptidoglycan biosynthesis. Its function is as follows. Cell wall formation. Catalyzes the addition of glutamate to the nucleotide precursor UDP-N-acetylmuramoyl-L-alanine (UMA). The protein is UDP-N-acetylmuramoylalanine--D-glutamate ligase of Pseudoalteromonas translucida (strain TAC 125).